The sequence spans 273 residues: Tyrosinase (273 aa).

Residues His-37, His-53, His-62, His-189, His-193, and His-215 each coordinate Cu cation.

This sequence belongs to the tyrosinase family. It depends on Cu(2+) as a cofactor.

The catalysed reaction is 2 L-dopa + O2 = 2 L-dopaquinone + 2 H2O. It carries out the reaction L-tyrosine + O2 = L-dopaquinone + H2O. In terms of biological role, this is a copper-containing oxidase that functions in the formation of pigments such as melanins and other polyphenolic compounds. The protein is Tyrosinase (melC2) of Streptomyces lincolnensis.